We begin with the raw amino-acid sequence, 388 residues long: Cuticle-degrading protease (388 aa).

Positions 1–18 are cleaved as a signal peptide; the sequence is MHLSALLTLLPAVLAAPA. The propeptide occupies 19–107; sequence TIGRRAEPAP…IEKDAVMRIS (89 aa). The region spanning 41–106 is the Inhibitor I9 domain; it reads KYIVKFKDDI…FIEKDAVMRI (66 aa). Residues 116–388 enclose the Peptidase S8 domain; the sequence is PWGLGRISHR…TVNYLAYNGA (273 aa). 2 disulfide bridges follow: Cys-143/Cys-233 and Cys-288/Cys-360. Residues Asp-148 and His-179 each act as charge relay system in the active site. N-linked (GlcNAc...) asparagine glycosylation is present at Asn-296. The active-site Charge relay system is Ser-334.

Belongs to the peptidase S8 family.

The protein resides in the secreted. In terms of biological role, capable of breaching the insect cuticle. This Metarhizium anisopliae (Entomophthora anisopliae) protein is Cuticle-degrading protease (PR1).